We begin with the raw amino-acid sequence, 166 residues long: Monothiol glutaredoxin-3 (166 aa).

Residues 56-159 (DSTDFEVFLE…STLDEWTHNK (104 aa)) enclose the Glutaredoxin domain. C76 provides a ligand contact to [2Fe-2S] cluster.

This sequence belongs to the glutaredoxin family. Monothiol subfamily. Homodimer.

The protein localises to the nucleus. Its function is as follows. Monothiol glutaredoxin involved in the biogenesis of iron-sulfur clusters. Binds one iron-sulfur cluster per dimer. The iron-sulfur cluster is bound between subunits, and is complexed by a bound glutathione and a cysteine residue from each subunit. This is Monothiol glutaredoxin-3 (grx3) from Schizosaccharomyces pombe (strain 972 / ATCC 24843) (Fission yeast).